Reading from the N-terminus, the 141-residue chain is Putative pre-16S rRNA nuclease (141 aa).

The protein belongs to the YqgF nuclease family.

The protein resides in the cytoplasm. In terms of biological role, could be a nuclease involved in processing of the 5'-end of pre-16S rRNA. The sequence is that of Putative pre-16S rRNA nuclease from Clostridioides difficile (strain 630) (Peptoclostridium difficile).